A 173-amino-acid chain; its full sequence is Small ribosomal subunit protein uS7 (173 aa).

The protein belongs to the universal ribosomal protein uS7 family. In terms of assembly, part of the 30S ribosomal subunit. Contacts proteins S9 and S11.

In terms of biological role, one of the primary rRNA binding proteins, it binds directly to 16S rRNA where it nucleates assembly of the head domain of the 30S subunit. Is located at the subunit interface close to the decoding center, probably blocks exit of the E-site tRNA. The protein is Small ribosomal subunit protein uS7 of Orientia tsutsugamushi (strain Boryong) (Rickettsia tsutsugamushi).